We begin with the raw amino-acid sequence, 314 residues long: MGCHNSKVCGQVSKKKKKNKAQEGEKRTKDIKLQDGRGTHSSEEERCCLENQLENYEWQLKILHAVLTASGDQEREQLLKDHPGDICTLVHSITEKVKTEISADLNDLHEQQMRSVSEQHQSETEELQRLHSEEKNVLNESHAAAEEALKDQIEDLTSELKLFNELKRRAEASTLKRDLQRNIETHGSPGEFWEQEQESLLFVIEMKRQNLQDQGNKLLQMEAQVEKNLSLEDQLLQALQQNEDFRVRIENYQSLIQQLSKEQNDMQEVLEKQSLQNQKLIQEKEELLFKLLHRRDSCSTFHLPSVIPTQVSPS.

Over residues 1-12 (MGCHNSKVCGQV) the composition is skewed to low complexity. 2 disordered regions span residues 1–43 (MGCH…HSSE) and 114–133 (RSVSEQHQSETEELQRLHSE). Gly-2 carries the N-myristoyl glycine lipid modification. Basic and acidic residues-rich tracts occupy residues 20–43 (KAQEGEKRTKDIKLQDGRGTHSSE) and 120–133 (HQSETEELQRLHSE). Residues 106–291 (NDLHEQQMRS…QEKEELLFKL (186 aa)) adopt a coiled-coil conformation.

The protein belongs to the CCDC69 family.

The protein localises to the cytoplasm. Its subcellular location is the cytoskeleton. The protein resides in the spindle. It localises to the midbody. May act as a scaffold to regulate the recruitment and assembly of spindle midzone components. In Danio rerio (Zebrafish), this protein is Coiled-coil domain-containing protein 69 (ccdc69).